An 88-amino-acid chain; its full sequence is Putative regulatory protein Npun_R3866 (88 aa).

This sequence belongs to the RemA family.

The chain is Putative regulatory protein Npun_R3866 from Nostoc punctiforme (strain ATCC 29133 / PCC 73102).